The sequence spans 556 residues: Acetyl-coenzyme A thioesterase (556 aa).

In terms of domain architecture, HotDog ACOT-type 1 spans Ala6–Gly118. Residue Lys34 is modified to N6-succinyllysine. CoA is bound by residues Thr54 to Ser56 and Ser83 to Ser85. At Lys97 the chain carries N6-succinyllysine. A CoA-binding site is contributed by Arg145. 2 positions are modified to N6-succinyllysine: Lys160 and Lys229. The HotDog ACOT-type 2 domain occupies Met180 to Gln295. Residue Lys235–Arg237 participates in CoA binding. The START domain occupies Gly327 to Ala536.

In terms of assembly, homodimer or homotetramer.

The protein resides in the cytoplasm. Its subcellular location is the cytosol. The catalysed reaction is acetyl-CoA + H2O = acetate + CoA + H(+). It catalyses the reaction butanoyl-CoA + H2O = butanoate + CoA + H(+). It carries out the reaction hexanoyl-CoA + H2O = hexanoate + CoA + H(+). Its pathway is lipid metabolism; fatty acid metabolism. Allosterically regulated by ATP (activator) and ADP (inhibitor). Cold labile, it dissociates into inactive monomers at low temperature. Catalyzes the hydrolysis of acyl-CoAs into free fatty acids and coenzyme A (CoASH), regulating their respective intracellular levels. Preferentially hydrolyzes acetyl-CoA. This chain is Acetyl-coenzyme A thioesterase (Acot12), found in Mus musculus (Mouse).